The chain runs to 544 residues: MAKDIKFSEEARRSMLRGVDTLANAVKVTLGPKGRNVVLEKKFGSPLITNDGVTIAKEIELEDAFENMGAKLVAEVASKTNDVAGDGTTTATVLAQAMIREGLKNVTAGANPMGLRKGIEKAVTAAIEELKAISKPIEGKSSIAQVAAISSADEEVGQLIAEAMERVGNDGVITLEESKGFTTELDVVEGMQFDRGYASPYMITDSDKMEAVLDNPYILITDKKISNIQEILPVLEQVVQQGKPLLIIAEDVEGEALATLVVNKLRGTFNVVAVKAPGFGDRRKAMLEDIAILTGGEVITEELGRDLKSATVESLGRAGKIVVTKENTTVVEGIGNSQQIEARIGQIRAQLEETTSEFDREKLQERLAKLAGGVAVIKVGAATETELKERKLRIEDALNSTRAAVEEGIVAGGGTSLMNVYTKVASIVAEGDEATGINIVLRALEEPVRQIAINAGLEGSVVVERLKGEKVGVGFNAATGEWVNMLESGIVDPAKVTRSALQNAASVAAMFLTTEAVVADKPEPNAPAMPDMGGMGMGGMGGMM.

ATP-binding positions include 29 to 32 (TLGP), 86 to 90 (DGTTT), Gly-413, 476 to 478 (NAA), and Asp-492.

It belongs to the chaperonin (HSP60) family. As to quaternary structure, forms a cylinder of 14 subunits composed of two heptameric rings stacked back-to-back. Interacts with the co-chaperonin GroES.

The protein resides in the cytoplasm. It catalyses the reaction ATP + H2O + a folded polypeptide = ADP + phosphate + an unfolded polypeptide.. Its function is as follows. Together with its co-chaperonin GroES, plays an essential role in assisting protein folding. The GroEL-GroES system forms a nano-cage that allows encapsulation of the non-native substrate proteins and provides a physical environment optimized to promote and accelerate protein folding. This Bacillus mycoides (strain KBAB4) (Bacillus weihenstephanensis) protein is Chaperonin GroEL.